We begin with the raw amino-acid sequence, 245 residues long: Zinc finger protein AZF1 (245 aa).

A compositionally biased stretch (polar residues) spans 1–15 (MALETLNSPTATTTA). Disordered stretches follow at residues 1 to 57 (MALE…NKNL) and 112 to 141 (LGGH…SHSN). The segment at 97 to 119 (YKCTVCGKSFSSYQALGGHKTSH) adopts a C2H2-type 1 zinc-finger fold. The segment covering 123–134 (TNTSITSGNQEL) has biased composition (polar residues). A C2H2-type 2 zinc finger spans residues 164–186 (HTCSICFKSFASGQALGGHKRCH). The tract at residues 193 to 231 (GNGNGSSSNSVELVAGSDVSDVDNERWSEESAIGGHRGF) is disordered.

As to expression, highly expressed in roots and at lower levels in leaves and stems.

The protein resides in the nucleus. Its function is as follows. Transcriptional repressor involved in the inhibition of plant growth under abiotic stress conditions. Can repress the expression of various genes, including osmotic stress and abscisic acid-repressive genes and auxin-inducible genes, by binding to their promoter regions in a DNA sequence-specific manner. The polypeptide is Zinc finger protein AZF1 (AZF1) (Arabidopsis thaliana (Mouse-ear cress)).